We begin with the raw amino-acid sequence, 220 residues long: GTP cyclohydrolase 1 (220 aa).

3 residues coordinate Zn(2+): C109, H112, and C180.

It belongs to the GTP cyclohydrolase I family. Homomer.

The catalysed reaction is GTP + H2O = 7,8-dihydroneopterin 3'-triphosphate + formate + H(+). It participates in cofactor biosynthesis; 7,8-dihydroneopterin triphosphate biosynthesis; 7,8-dihydroneopterin triphosphate from GTP: step 1/1. This Pectobacterium carotovorum subsp. carotovorum (strain PC1) protein is GTP cyclohydrolase 1.